Consider the following 593-residue polypeptide: Chromodomain Y-like protein (593 aa).

Residues 1 to 14 show a composition bias toward polar residues; that stretch reads MGIGNSQPNSQEAQ. Residues 1–30 are disordered; that stretch reads MGIGNSQPNSQEAQLCTLPEKAEQPTDDNT. The Chromo domain occupies 56–116; it reads TQVESIVDKR…RHNERQKEGS (61 aa). Positions 56-304 are interaction with EZH2; the sequence is TQVESIVDKR…TIQTSVTGVT (249 aa). S83 carries the post-translational modification Phosphoserine. The tract at residues 110 to 158 is disordered; sequence ERQKEGSLARASRASPSNARKQISRSTHSTLSKTNSKALVVGKDHESKS. A compositionally biased stretch (low complexity) spans 117 to 129; that stretch reads LARASRASPSNAR. Position 130 is an N6,N6,N6-trimethyllysine; by EHMT2; alternate (K130). K130 is modified (N6,N6-dimethyllysine; by EHMT2; alternate). K130 carries the N6-methyllysine; by EHMT2; alternate modification. The span at 133-146 shows a compositional bias: polar residues; that stretch reads SRSTHSTLSKTNSK. S165, S196, and S211 each carry phosphoserine. The tract at residues 200-223 is disordered; the sequence is GRTSVDGFQGESPEKLDPVDQGAE. The acetyl-CoA-binding domain stretch occupies residues 357 to 589; the sequence is SENNSLNPEV…DSMLKYLQRK (233 aa).

In terms of assembly, forms multimers and multimerization is required for stable binding to chromatin. Interacts with HDAC1 and HDAC2 via its C-terminal acetyl-CoA-binding domain. Interacts with EZH2, EED, SUZ12, REST, EHMT1 and EHMT2. Part of a complex containing at least CDYL, REST, WIZ, SETB1, EHMT1 and EHMT2. Part of a complex containing at least CDYL, MIER1, MIER2, HDAC1 and HDAC2. Interacts with CHAF1A and CHAF1B; bridging the CAF-1 complex to the MCM2-7 (MCM) complex. Interacts with MCM3 and MCM5; bridging the CAF-1 complex to the MCM2-7 (MCM) complex. Interacts with EHMT2 and PRDM9; interaction only takes place when PRDM9 is bound to hotspot DNA. Highly expressed in testis (at protein level). Expressed in the hippocampus (at protein level). Expressed in the medial prefrontal cortex, prelimbic cortex, intralimbic cortex and cingulate cortex area (at protein level). Isoform 1: Expressed as 2 transcripts encoding the same protein, a ubiquitous transcript and a highly expressed testis-specific transcript.

Its subcellular location is the nucleus. The protein resides in the chromosome. It carries out the reaction L-lysyl-[protein] + acetyl-CoA = N(6)-acetyl-L-lysyl-[protein] + CoA + H(+). It catalyses the reaction 3-hydroxybutanoyl-CoA = (2E)-butenoyl-CoA + H2O. Its function is as follows. Chromatin reader protein that recognizes and binds histone H3 trimethylated at 'Lys-9', dimethylated at 'Lys-27' and trimethylated at 'Lys-27' (H3K9me3, H3K27me2 and H3K27me3, respectively). Part of multimeric repressive chromatin complexes, where it is required for transmission and restoration of repressive histone marks, thereby preserving the epigenetic landscape. Required for chromatin targeting and maximal enzymatic activity of Polycomb repressive complex 2 (PRC2); acts as a positive regulator of PRC2 activity by bridging the pre-existing histone H3K27me3 and newly recruited PRC2 on neighboring nucleosomes. Acts as a corepressor for REST by facilitating histone-lysine N-methyltransferase EHMT2 recruitment and H3K9 dimethylation at REST target genes for repression. Involved in X chromosome inactivation in females: recruited to Xist RNA-coated X chromosome and facilitates propagation of H3K9me2 by anchoring EHMT2. Promotes EZH2 accumulation and H3K27me3 methylation at DNA double strand breaks (DSBs), thereby facilitating transcriptional repression at sites of DNA damage and homology-directed repair of DSBs. Required for neuronal migration during brain development by repressing expression of RHOA. By repressing the expression of SCN8A, contributes to the inhibition of intrinsic neuronal excitability and epileptogenesis. In addition to acting as a chromatin reader, acts as a hydro-lyase. Shows crotonyl-coA hydratase activity by mediating the conversion of crotonyl-CoA ((2E)-butenoyl-CoA) to beta-hydroxybutyryl-CoA (3-hydroxybutanoyl-CoA), thereby acting as a negative regulator of histone crotonylation. Histone crotonylation is required during spermatogenesis; down-regulation of histone crotonylation by CDYL regulates the reactivation of sex chromosome-linked genes in round spermatids and histone replacement in elongating spermatids. By regulating histone crotonylation and trimethylation of H3K27, may be involved in stress-induced depression-like behaviors, possibly by regulating VGF expression. May have histone acetyltransferase activity; such activity is however unsure in vivo. Functionally, not able to recognize and bind histone H3K9me3, histone H3K27me2 and histone H3K27me3, due to the presence of a N-terminal extension that inactivates the chromo domain. In Mus musculus (Mouse), this protein is Chromodomain Y-like protein.